Consider the following 177-residue polypeptide: Large ribosomal subunit protein uL6 (177 aa).

The protein belongs to the universal ribosomal protein uL6 family. In terms of assembly, part of the 50S ribosomal subunit.

Functionally, this protein binds to the 23S rRNA, and is important in its secondary structure. It is located near the subunit interface in the base of the L7/L12 stalk, and near the tRNA binding site of the peptidyltransferase center. The sequence is that of Large ribosomal subunit protein uL6 from Laribacter hongkongensis (strain HLHK9).